A 192-amino-acid polypeptide reads, in one-letter code: Probable apo-citrate lyase phosphoribosyl-dephospho-CoA transferase (192 aa).

The protein belongs to the CitX family.

The enzyme catalyses apo-[citrate lyase ACP] + 2'-(5''-triphospho-alpha-D-ribosyl)-3'-dephospho-CoA = holo-[citrate lyase ACP] + diphosphate. Transfers 2-(5''-triphosphoribosyl)-3'-dephosphocoenzyme-A on a serine residue to the apo-acyl carrier protein (gamma chain) of the citrate lyase to yield holo-acyl carrier protein. The protein is Probable apo-citrate lyase phosphoribosyl-dephospho-CoA transferase of Streptococcus pyogenes serotype M3 (strain ATCC BAA-595 / MGAS315).